The sequence spans 101 residues: Small ribosomal subunit protein bS18c (101 aa).

The protein belongs to the bacterial ribosomal protein bS18 family. As to quaternary structure, part of the 30S ribosomal subunit.

It localises to the plastid. The protein resides in the chloroplast. This chain is Small ribosomal subunit protein bS18c, found in Aethionema cordifolium (Lebanon stonecress).